The sequence spans 388 residues: Carbamoyl phosphate synthase small chain (388 aa).

The interval 1-198 is CPSase; it reads MSQDLLPGVT…WPEGYAKLDK (198 aa). Residues Ser53, Gly250, and Gly252 each coordinate L-glutamine. Positions 202 to 388 constitute a Glutamine amidotransferase type-1 domain; the sequence is EVVVIDYGVK…RFAGLMDAAK (187 aa). Cys279 acts as the Nucleophile in catalysis. L-glutamine is bound by residues Leu280, Gln283, Asn321, Gly323, and Phe324. Catalysis depends on residues His363 and Glu365.

The protein belongs to the CarA family. As to quaternary structure, composed of two chains; the small (or glutamine) chain promotes the hydrolysis of glutamine to ammonia, which is used by the large (or ammonia) chain to synthesize carbamoyl phosphate. Tetramer of heterodimers (alpha,beta)4.

It carries out the reaction hydrogencarbonate + L-glutamine + 2 ATP + H2O = carbamoyl phosphate + L-glutamate + 2 ADP + phosphate + 2 H(+). The enzyme catalyses L-glutamine + H2O = L-glutamate + NH4(+). It participates in amino-acid biosynthesis; L-arginine biosynthesis; carbamoyl phosphate from bicarbonate: step 1/1. It functions in the pathway pyrimidine metabolism; UMP biosynthesis via de novo pathway; (S)-dihydroorotate from bicarbonate: step 1/3. Its function is as follows. Small subunit of the glutamine-dependent carbamoyl phosphate synthetase (CPSase). CPSase catalyzes the formation of carbamoyl phosphate from the ammonia moiety of glutamine, carbonate, and phosphate donated by ATP, constituting the first step of 2 biosynthetic pathways, one leading to arginine and/or urea and the other to pyrimidine nucleotides. The small subunit (glutamine amidotransferase) binds and cleaves glutamine to supply the large subunit with the substrate ammonia. In Caulobacter vibrioides (strain ATCC 19089 / CIP 103742 / CB 15) (Caulobacter crescentus), this protein is Carbamoyl phosphate synthase small chain.